The sequence spans 293 residues: uncharacterized protein (293 aa).

2 disordered regions span residues 1-95 (MFLR…KDKA) and 268-293 (EETA…GRAL). Phosphoserine occurs at positions 34, 35, and 89. 2 stretches are compositionally biased toward basic and acidic residues: residues 85-95 (KRMDSLKKDKA) and 277-286 (GQGKEAKEQT).

This is an uncharacterized protein from Rattus norvegicus (Rat).